Reading from the N-terminus, the 347-residue chain is Quinolinate synthase (347 aa).

Iminosuccinate-binding residues include histidine 47 and serine 68. Cysteine 113 lines the [4Fe-4S] cluster pocket. Residues 139-141 and serine 156 each bind iminosuccinate; that span reads YAN. Cysteine 200 lines the [4Fe-4S] cluster pocket. Iminosuccinate is bound by residues 226–228 and threonine 243; that span reads HPE. Residue cysteine 297 coordinates [4Fe-4S] cluster.

This sequence belongs to the quinolinate synthase family. Type 1 subfamily. It depends on [4Fe-4S] cluster as a cofactor.

The protein resides in the cytoplasm. The catalysed reaction is iminosuccinate + dihydroxyacetone phosphate = quinolinate + phosphate + 2 H2O + H(+). It functions in the pathway cofactor biosynthesis; NAD(+) biosynthesis; quinolinate from iminoaspartate: step 1/1. In terms of biological role, catalyzes the condensation of iminoaspartate with dihydroxyacetone phosphate to form quinolinate. This Escherichia coli O139:H28 (strain E24377A / ETEC) protein is Quinolinate synthase.